The chain runs to 101 residues: Small ribosomal subunit protein uS14 (101 aa).

This sequence belongs to the universal ribosomal protein uS14 family. In terms of assembly, part of the 30S ribosomal subunit. Contacts proteins S3 and S10.

Functionally, binds 16S rRNA, required for the assembly of 30S particles and may also be responsible for determining the conformation of the 16S rRNA at the A site. The polypeptide is Small ribosomal subunit protein uS14 (Orientia tsutsugamushi (strain Ikeda) (Rickettsia tsutsugamushi)).